Reading from the N-terminus, the 59-residue chain is Large ribosomal subunit protein uL30 (59 aa).

It belongs to the universal ribosomal protein uL30 family. In terms of assembly, part of the 50S ribosomal subunit.

This Aliivibrio fischeri (strain MJ11) (Vibrio fischeri) protein is Large ribosomal subunit protein uL30.